A 450-amino-acid polypeptide reads, in one-letter code: Glucose-6-phosphate isomerase (450 aa).

Thr39 carries the phosphothreonine modification. The Proton donor role is filled by Glu291. Active-site residues include His312 and Lys426.

This sequence belongs to the GPI family.

It is found in the cytoplasm. It carries out the reaction alpha-D-glucose 6-phosphate = beta-D-fructose 6-phosphate. It functions in the pathway carbohydrate biosynthesis; gluconeogenesis. The protein operates within carbohydrate degradation; glycolysis; D-glyceraldehyde 3-phosphate and glycerone phosphate from D-glucose: step 2/4. Its function is as follows. Catalyzes the reversible isomerization of glucose-6-phosphate to fructose-6-phosphate. In Bacillus cereus (strain G9842), this protein is Glucose-6-phosphate isomerase.